A 244-amino-acid chain; its full sequence is Phosphonates import ATP-binding protein PhnC 2 (244 aa).

One can recognise an ABC transporter domain in the interval 3–242 (LRVEGLKKVY…ELTDYTVDQL (240 aa)). 36–43 (GPSGAGKS) is an ATP binding site.

The protein belongs to the ABC transporter superfamily. Phosphonates importer (TC 3.A.1.9.1) family. In terms of assembly, the complex is composed of two ATP-binding proteins (PhnC), two transmembrane proteins (PhnE) and a solute-binding protein (PhnD).

Its subcellular location is the cell membrane. It catalyses the reaction phosphonate(out) + ATP + H2O = phosphonate(in) + ADP + phosphate + H(+). Functionally, part of the ABC transporter complex PhnCDE involved in phosphonates import. Responsible for energy coupling to the transport system. The polypeptide is Phosphonates import ATP-binding protein PhnC 2 (Halalkalibacterium halodurans (strain ATCC BAA-125 / DSM 18197 / FERM 7344 / JCM 9153 / C-125) (Bacillus halodurans)).